An 85-amino-acid chain; its full sequence is Toxin 3FTx-Lei1 (85 aa).

A signal peptide spans 1-21 (MKTLLLSLVVVTFVCLDLAHT). Intrachain disulfides connect cysteine 24–cysteine 45, cysteine 27–cysteine 32, cysteine 38–cysteine 63, cysteine 67–cysteine 78, and cysteine 79–cysteine 84.

The protein belongs to the three-finger toxin family. Ancestral subfamily. As to expression, expressed by the venom gland.

The protein resides in the secreted. This is Toxin 3FTx-Lei1 from Leioheterodon madagascariensis (Malagasy giant hognose snake).